The primary structure comprises 689 residues: DNA ligase (689 aa).

NAD(+) is bound by residues 35-39 (DEVYD), 84-85 (SL), and Glu122. Lys124 (N6-AMP-lysine intermediate) is an active-site residue. NAD(+) contacts are provided by Arg145, Glu182, Lys308, and Lys332. 4 residues coordinate Zn(2+): Cys426, Cys429, Cys444, and Cys449. In terms of domain architecture, BRCT spans 612–689 (TTEKSLNGKR…NETELIQMCR (78 aa)).

The protein belongs to the NAD-dependent DNA ligase family. LigA subfamily. Requires Mg(2+) as cofactor. It depends on Mn(2+) as a cofactor.

It catalyses the reaction NAD(+) + (deoxyribonucleotide)n-3'-hydroxyl + 5'-phospho-(deoxyribonucleotide)m = (deoxyribonucleotide)n+m + AMP + beta-nicotinamide D-nucleotide.. Its function is as follows. DNA ligase that catalyzes the formation of phosphodiester linkages between 5'-phosphoryl and 3'-hydroxyl groups in double-stranded DNA using NAD as a coenzyme and as the energy source for the reaction. It is essential for DNA replication and repair of damaged DNA. The polypeptide is DNA ligase (Thermosynechococcus vestitus (strain NIES-2133 / IAM M-273 / BP-1)).